We begin with the raw amino-acid sequence, 322 residues long: Mitochondrial uncoupling protein 4 (322 aa).

3 Solcar repeats span residues 20 to 114, 124 to 216, and 225 to 316; these read SKFL…LREV, YPLW…VKHY, and DNIS…IREM. 6 helical membrane passes run 22–39, 87–108, 126–143, 194–211, 228–247, and 287–310; these read FLLS…TFPL, WQGV…MVTY, LWKS…GQFL, PNIQ…TTYD, STHG…LGTP, and SLYK…WLTY.

This sequence belongs to the mitochondrial carrier (TC 2.A.29) family. In terms of assembly, homotetramer.

It localises to the mitochondrion inner membrane. It is found in the cell projection. Its subcellular location is the neuron projection. The catalysed reaction is H(+)(in) = H(+)(out). It carries out the reaction chloride(in) = chloride(out). Functionally, facilitates proton transport across the inner mitochondrial membrane and may dissipate excessive proton gradient associated with oxidative and metabolic stress at neuronal synapses. Regulates glutamate-induced proton conductance in astrocytes, shifting the energy metabolism toward aerobic glycolysis and lactate transfer to neurons for ATP synthesis. Can transport chloride ions with lower efficiency. The transport mechanism remains to be elucidated. The sequence is that of Mitochondrial uncoupling protein 4 from Mus musculus (Mouse).